We begin with the raw amino-acid sequence, 335 residues long: Zinc finger protein 396 (335 aa).

Positions 52–134 constitute an SCAN box domain; the sequence is RQQFRQFGYQ…TMLEDVEREL (83 aa). 3 C2H2-type zinc fingers span residues 251-273, 279-301, and 307-329; these read QKCD…QRIH, YACD…RRTH, and YKCH…RKRH.

The protein belongs to the krueppel C2H2-type zinc-finger protein family. As to quaternary structure, isoforms 1 and 2 can both homo- and hetero-associate. In terms of tissue distribution, expressed strongly in liver, moderately in skeletal muscle and weakly in kidney, pancreas, spleen and prostate.

The protein localises to the nucleus. It is found in the cytoplasm. Its function is as follows. Isoform 1 and isoform 2 act as DNA-dependent transcriptional repressors. In Homo sapiens (Human), this protein is Zinc finger protein 396 (ZNF396).